A 1112-amino-acid chain; its full sequence is Cytosolic carboxypeptidase 4 (1112 aa).

The tract at residues 291 to 345 (TTEPPHDLPEEDFEDDGDDEVDKDSDTEDGKVEDDDLETDVNKLSSKPGLDRPEE) is disordered. Over residues 299 to 329 (PEEDFEDDGDDEVDKDSDTEDGKVEDDDLET) the composition is skewed to acidic residues. Residues 732–1022 (YPYTYTALMT…HPVDGLQGLQ (291 aa)) enclose the Peptidase M14 domain. Positions 804, 807, and 901 each coordinate Zn(2+). Catalysis depends on Glu986, which acts as the Proton donor/acceptor.

The protein belongs to the peptidase M14 family. In terms of assembly, interacts with MYLK. Interacts with TCF4. It depends on Zn(2+) as a cofactor. Expressed in corneal endothelium.

The protein localises to the cytoplasm. It is found in the cytosol. It carries out the reaction (L-glutamyl)(n+1)-gamma-L-glutamyl-L-glutamyl-[protein] + H2O = (L-glutamyl)(n)-gamma-L-glutamyl-L-glutamyl-[protein] + L-glutamate. The enzyme catalyses C-terminal L-alpha-aminoacyl-L-glutamyl-L-glutamyl-[tubulin] + H2O = C-terminal L-alpha-aminoacyl-L-glutamyl-[tubulin] + L-glutamate. Its function is as follows. Metallocarboxypeptidase that mediates deglutamylation of tubulin and non-tubulin target proteins. Catalyzes the removal of polyglutamate side chains present on the gamma-carboxyl group of glutamate residues within the C-terminal tail of tubulin protein. Specifically cleaves tubulin long-side-chains, while it is not able to remove the branching point glutamate. Also catalyzes the removal of polyglutamate residues from the carboxy-terminus of non-tubulin proteins such as MYLK. The protein is Cytosolic carboxypeptidase 4 of Homo sapiens (Human).